We begin with the raw amino-acid sequence, 396 residues long: Dihydrolipoyllysine-residue acetyltransferase component of pyruvate dehydrogenase complex (396 aa).

Residues 1–69 (MPDIGLEEVE…KTDALIMRCE (69 aa)) enclose the Lipoyl-binding domain. An N6-lipoyllysine modification is found at Lys-35. In terms of domain architecture, Peripheral subunit-binding (PSBD) spans 104-141 (HATPLIRRLARNLNINLYDVVGTGPKNRILKEDLDLYQ). The active site involves His-369.

The protein belongs to the 2-oxoacid dehydrogenase family. In terms of assembly, forms a 24-polypeptide structural core with octahedral symmetry. It depends on (R)-lipoate as a cofactor.

It catalyses the reaction N(6)-[(R)-dihydrolipoyl]-L-lysyl-[protein] + acetyl-CoA = N(6)-[(R)-S(8)-acetyldihydrolipoyl]-L-lysyl-[protein] + CoA. The pyruvate dehydrogenase complex catalyzes the overall conversion of pyruvate to acetyl-CoA and CO(2). It contains multiple copies of three enzymatic components: pyruvate dehydrogenase (E1), dihydrolipoamide acetyltransferase (E2) and lipoamide dehydrogenase (E3). This is Dihydrolipoyllysine-residue acetyltransferase component of pyruvate dehydrogenase complex (aceF) from Buchnera aphidicola subsp. Acyrthosiphon pisum (strain APS) (Acyrthosiphon pisum symbiotic bacterium).